A 417-amino-acid chain; its full sequence is Magnesium-protoporphyrin IX monomethyl ester [oxidative] cyclase, chloroplastic (417 aa).

A chloroplast-targeting transit peptide spans 1 to 45 (MASAMELSLLNPAMHHYGIAAKTASHLPVVPARRASSGAVRFRVR).

The protein belongs to the AcsF family. Fe cation is required as a cofactor.

Its subcellular location is the plastid. The protein localises to the chloroplast membrane. It catalyses the reaction Mg-protoporphyrin IX 13-monomethyl ester + 3 NADPH + 3 O2 + 2 H(+) = 3,8-divinyl protochlorophyllide a + 3 NADP(+) + 5 H2O. Its pathway is porphyrin-containing compound metabolism; chlorophyll biosynthesis. Its function is as follows. Catalyzes the formation of the isocyclic ring in chlorophyll biosynthesis. Mediates the cyclase reaction, which results in the formation of divinylprotochlorophyllide (Pchlide) characteristic of all chlorophylls from magnesium-protoporphyrin IX 13-monomethyl ester (MgPMME). This chain is Magnesium-protoporphyrin IX monomethyl ester [oxidative] cyclase, chloroplastic (CRD1), found in Hordeum vulgare (Barley).